We begin with the raw amino-acid sequence, 690 residues long: Protein arginine N-methyltransferase 7 (690 aa).

SAM-dependent MTase PRMT-type domains are found at residues 14 to 357 (ENSW…YSLW) and 366 to 690 (AKSV…QKKP).

The protein belongs to the class I-like SAM-binding methyltransferase superfamily. Protein arginine N-methyltransferase family. PRMT7 subfamily.

Functionally, essential arginine methyltransferase that can both catalyze the formation of omega-N monomethylarginine (MMA) and symmetrical dimethylarginine (sDMA). Specifically mediates the symmetrical dimethylation of arginine residues in the small nuclear ribonucleoproteins SmD1 and SmD3. This is Protein arginine N-methyltransferase 7 (Art7) from Drosophila ananassae (Fruit fly).